A 659-amino-acid chain; its full sequence is DNA ligase (659 aa).

NAD(+)-binding positions include 32-36 (DFEYD), 81-82 (SL), and glutamate 111. Residue lysine 113 is the N6-AMP-lysine intermediate of the active site. 4 residues coordinate NAD(+): arginine 134, glutamate 168, lysine 280, and lysine 304. 4 residues coordinate Zn(2+): cysteine 398, cysteine 401, cysteine 416, and cysteine 421. Positions 585 to 655 (ETNSIYFQKR…KELNIPIINE (71 aa)) constitute a BRCT domain.

The protein belongs to the NAD-dependent DNA ligase family. LigA subfamily. It depends on Mg(2+) as a cofactor. Requires Mn(2+) as cofactor.

The catalysed reaction is NAD(+) + (deoxyribonucleotide)n-3'-hydroxyl + 5'-phospho-(deoxyribonucleotide)m = (deoxyribonucleotide)n+m + AMP + beta-nicotinamide D-nucleotide.. Functionally, DNA ligase that catalyzes the formation of phosphodiester linkages between 5'-phosphoryl and 3'-hydroxyl groups in double-stranded DNA using NAD as a coenzyme and as the energy source for the reaction. It is essential for DNA replication and repair of damaged DNA. This Mycoplasma genitalium (strain ATCC 33530 / DSM 19775 / NCTC 10195 / G37) (Mycoplasmoides genitalium) protein is DNA ligase.